We begin with the raw amino-acid sequence, 475 residues long: CAAX prenyl protease 1 homolog (475 aa).

The Lumenal segment spans residues 1-18; the sequence is MGMWASLDALWEMPAEKR. Residues 19 to 39 traverse the membrane as a helical segment; sequence IFGAVLLFSWTVYLWETFLAQ. Over 40-81 the chain is Nuclear; sequence RQRRIYKTTTHVPPELGQIMDSETFEKSRLYQLDKSTFSFWS. The helical transmembrane segment at 82 to 102 threads the bilayer; sequence GLYSETEGTLILLFGGIPYLW. Residues 103–123 lie on the Lumenal side of the membrane; the sequence is RLSGRFCGYAGFGPEYEITQS. The chain crosses the membrane as a helical span at residues 124-144; that stretch reads LVFLLLATLFSALTGLPWSLY. Residues 145–170 are Nuclear-facing; the sequence is NTFVIEEKHGFNQQTLGFFMKDAIKK. A helical membrane pass occupies residues 171–191; that stretch reads FVVTQCILLPVSSLLLYIIKI. Residues 192–195 are Lumenal-facing; it reads GGDY. Residues 196–216 traverse the membrane as a helical segment; it reads FFIYAWLFTLVVSLVLVTIYA. Topologically, residues 217–347 are nuclear; the sequence is DYIAPLFDKF…GHWKLGHTVK (131 aa). Position 335 (His-335) interacts with Zn(2+). Glu-336 is a catalytic residue. Residue His-339 participates in Zn(2+) binding. Residues 348-368 form a helical membrane-spanning segment; the sequence is NIIISQMNSFLCFFLFAVLIG. The Lumenal segment spans residues 369 to 382; it reads RKELFAAFGFYDSQ. The helical transmembrane segment at 383–405 threads the bilayer; it reads PTLIGLLIIFQFIFSPYNEVLSF. At 406 to 475 the chain is on the nuclear side; that stretch reads CLTVLSRRFE…LQALKTMKQH (70 aa). Glu-415 contacts Zn(2+).

Belongs to the peptidase M48A family. The cofactor is Zn(2+). In terms of tissue distribution, widely expressed. High levels in kidney, prostate, testis and ovary.

The protein localises to the endoplasmic reticulum membrane. Its subcellular location is the nucleus inner membrane. The protein resides in the early endosome membrane. It localises to the late endosome membrane. The enzyme catalyses Hydrolyzes the peptide bond -P2-(S-farnesyl or geranylgeranyl)C-P1'-P2'-P3'-COOH where P1' and P2' are amino acids with aliphatic side chains and P3' is any C-terminal residue.. Transmembrane metalloprotease whose catalytic activity is critical for processing lamin A/LMNA on the inner nuclear membrane and clearing clogged translocons on the endoplasmic reticulum. Proteolytically removes the C-terminal three residues of farnesylated proteins. Also plays an antiviral role independently of its protease activity by restricting enveloped RNA and DNA viruses, including influenza A, Zika, Ebola, Sindbis, vesicular stomatitis, cowpox, and vaccinia. Mechanistically, controls IFITM antiviral pathway to hinder viruses from breaching the endosomal barrier by modulating membrane fluidity. In Homo sapiens (Human), this protein is CAAX prenyl protease 1 homolog.